The following is a 1037-amino-acid chain: Ras guanine nucleotide exchange factor E (1037 aa).

Residues 5–35 (ECNNRIEYLQNKVLELESLNENLKGQLEYFQ) are a coiled coil. Disordered stretches follow at residues 65–100 (NNNN…TTNN), 114–150 (TNSN…ELSN), 166–387 (TTTT…PLSN), 414–437 (TVNM…LYHS), 451–472 (SSLS…LTNP), 602–628 (INSN…NQLE), 907–935 (NTTT…QQLN), and 1004–1037 (EKET…SFKS). 2 stretches are compositionally biased toward low complexity: residues 114–145 (TNSN…NNSN) and 166–200 (TTTT…NNNN). Residues 229 to 239 (PTSSRNSPTNK) are compositionally biased toward polar residues. Residues 240-276 (SSPQFLSPLSKSPLSQSTQSTTVSSPSPSWTTTVPQS) show a composition bias toward low complexity. The span at 282 to 300 (TIVQSKSPYSPDTNISNKL) shows a compositional bias: polar residues. The segment covering 318–360 (SPSKNSPRSLNSNNNNSSATTSITTPPTTSTPTPTTSTTTTTT) has biased composition (low complexity). Residues 361-370 (TERRPEDRRS) show a composition bias toward basic and acidic residues. Polar residues-rich tracts occupy residues 372–387 (TSPF…PLSN) and 424–437 (PRSN…LYHS). The region spanning 496–694 (NGFIVKGGTI…NLKRLLTNDR (199 aa)) is the N-terminal Ras-GEF domain. Positions 726-1003 (DPTEIARQLT…YKLSLICEPK (278 aa)) constitute a Ras-GEF domain. Residues 907–930 (NTTTTTTTTTTTTTTNTTTSNNNN) are compositionally biased toward low complexity. Over residues 1027 to 1037 (SVTSLLNSFKS) the composition is skewed to polar residues.

Its function is as follows. Promotes the exchange of Ras-bound GDP by GTP. Seems to play a role in chemotaxis. The sequence is that of Ras guanine nucleotide exchange factor E (gefE) from Dictyostelium discoideum (Social amoeba).